The primary structure comprises 405 residues: Glucose-1-phosphate adenylyltransferase (405 aa).

Residues tyrosine 96, glycine 161, 176–177 (EK), and serine 194 each bind alpha-D-glucose 1-phosphate.

It belongs to the bacterial/plant glucose-1-phosphate adenylyltransferase family. In terms of assembly, homotetramer.

The enzyme catalyses alpha-D-glucose 1-phosphate + ATP + H(+) = ADP-alpha-D-glucose + diphosphate. Its pathway is glycan biosynthesis; glycogen biosynthesis. Functionally, involved in the biosynthesis of ADP-glucose, a building block required for the elongation reactions to produce glycogen. Catalyzes the reaction between ATP and alpha-D-glucose 1-phosphate (G1P) to produce pyrophosphate and ADP-Glc. The sequence is that of Glucose-1-phosphate adenylyltransferase from Aliivibrio fischeri (strain MJ11) (Vibrio fischeri).